A 124-amino-acid chain; its full sequence is Competence protein ComGG (124 aa).

The signal sequence occupies residues 1-28 (MYRTRGFIYPAVLFVSALVLLIVNFVAA).

The transformation pili are flexible filaments, consisting mainly of the major pilin ComGC and smaller amounts of the minor pilins, including at least ComGD, ComGF and ComGG. Interacts with ComGC; the interaction is probably direct. Interacts with ComGD. Interacts with ComGF. May act as a link between ComGC, ComGD and ComGF. Homodimer; disulfide-linked. A minor fraction of ComGG is found as a disulfide-bonded homodimer. In terms of processing, partial processing of ComGG in competent cells requires ComC.

The protein resides in the cell membrane. The protein localises to the secreted. Required for formation of the type IV-like pilus (T4P) that plays a role in transformation. Transformation pili are dynamically extended and retracted, perhaps thereby promoting DNA uptake and transformation. Required for transformation and DNA binding. The chain is Competence protein ComGG (comGG) from Bacillus subtilis (strain 168).